A 340-amino-acid chain; its full sequence is Sulfotransferase ppzF (340 aa).

The protein operates within secondary metabolite biosynthesis. Its function is as follows. Sulfotransferase; part of the gene cluster that mediates the biosynthesis of pyrrolopyrazines, secondary metabolites showing insecticidal activity. The role of ppzF within the pathway has still to be determined. The single multifunctional NRPS ppzA is sufficient to produce peramine via condensation of 1-pyrroline-5-carboxylate and arginine, N-methylation of the alpha-amino group of arginine and reduction of the thioester and the cyclization to form an iminium ion resulting in release from the peptide synthetase. Deprotonation of this intermediate and oxidation of the pyrroline ring would give rise to peramine. In Epichloe species that produce only peramine, the peramine synthetase gene is not localized in a gene cluster, in contrast to Metarhizium species that contain additional pyrrolopyrazine biosynthesis genes. The 2-oxoglutarate-Fe(II) type oxidoreductase ppzC hydroxylates peramine to yield the newly identified compound 8-hydroxyperamine whereas ppzD converts L-proline into trans-4-hydroxy-L-proline, a precursor of peramine biosynthesis. This is Sulfotransferase ppzF from Metarhizium majus (strain ARSEF 297).